We begin with the raw amino-acid sequence, 482 residues long: Iroquois-class homeodomain protein irx-5 (482 aa).

The homeobox DNA-binding region spans 109–171 (DPAYRKNATR…NARRRLKKEN (63 aa)). Disordered stretches follow at residues 173-307 (MTWT…HQSH) and 462-482 (QSQADLNKDTPYEMKKGMSSI). Positions 182 to 198 (EDEEDDENIDLEKNEED) are enriched in acidic residues. Basic and acidic residues predominate over residues 199–256 (DPRKLEEKGDQDGDAGDQKRSPSAVDFDRLEGEVRQGKELDQTRSDSEQNEVEERNDL). A compositionally biased stretch (pro residues) spans 264–273 (PTSPLCPPDQ). The span at 284 to 305 (HRHTVHNHHHQSIQQLHHHSHQ) shows a compositional bias: basic residues. Positions 467-482 (LNKDTPYEMKKGMSSI) are enriched in basic and acidic residues.

This sequence belongs to the TALE/IRO homeobox family. As to expression, expressed in the neural plate in overlapping patterns with other irx members, which all share an anterior border of expression. Broadly expressed in the tailbud rhombencephalon (hindbrain). Outside the nervous system and at tailbud stages, expressed in the developing otic vesicle and branchial arches.

The protein resides in the nucleus. Functionally, acts partially redundantly with other irx members in neural patterning. Required for formation of the posterior forebrain, midbrain, hindbrain, and to a lesser extent, spinal cord. Patterns the neuroectoderm in both the anterior/posterior and dorsal/ventral axes. Does not appear to play a role in pronephros kidney development. Involved in craniofacial and gonadal development. Modulates the migration of progenitor cell populations in branchial arches and gonads by repressing CXCL12. This is Iroquois-class homeodomain protein irx-5 from Xenopus tropicalis (Western clawed frog).